The chain runs to 83 residues: Apolipoprotein C-I, basic form (83 aa).

Positions 1–26 (MRLFLSLPVLVVVLSMVLEGPAPVQG) are cleaved as a signal peptide.

Belongs to the apolipoprotein C1 family.

It localises to the secreted. Inhibitor of lipoprotein binding to the low density lipoprotein (LDL) receptor, LDL receptor-related protein, and very low density lipoprotein (VLDL) receptor. Associates with high density lipoproteins (HDL) and the triacylglycerol-rich lipoproteins in the plasma and makes up about 10% of the protein of the VLDL and 2% of that of HDL. Appears to interfere directly with fatty acid uptake and is also the major plasma inhibitor of cholesteryl ester transfer protein (CETP). Binds free fatty acids and reduces their intracellular esterification. Modulates the interaction of APOE with beta-migrating VLDL and inhibits binding of beta-VLDL to the LDL receptor-related protein. The polypeptide is Apolipoprotein C-I, basic form (APOC1) (Papio anubis (Olive baboon)).